A 155-amino-acid chain; its full sequence is Nucleosome assembly protein 1-like 5 (155 aa).

Residues 1–16 show a composition bias toward basic and acidic residues; that stretch reads MADPEKQGPAESRAED. Positions 1-60 are disordered; sequence MADPEKQGPAESRAEDEVMEGAQGGEDAATGDSATAPAAEEPQAPAENAPKPKNDFIESL. Over residues 27–49 the composition is skewed to low complexity; the sequence is DAATGDSATAPAAEEPQAPAENA. The stretch at 68 to 94 forms a coiled coil; it reads VLALKKLQKRCDKIEAKFDKEFQALEK. Residues 119 to 155 form a disordered region; that stretch reads WTLEGEDDEDDEEEEDEEEEEEEAAAGATGGPDSAEK. Acidic residues predominate over residues 122–142; sequence EGEDDEDDEEEEDEEEEEEEA.

The protein belongs to the nucleosome assembly protein (NAP) family.

Its subcellular location is the nucleus. The sequence is that of Nucleosome assembly protein 1-like 5 (Nap1l5) from Rattus norvegicus (Rat).